Here is a 343-residue protein sequence, read N- to C-terminus: Uroporphyrinogen decarboxylase (343 aa).

Residues 25-29, Asp-75, Tyr-152, Ser-207, and His-323 each bind substrate; that span reads RQAGR.

The protein belongs to the uroporphyrinogen decarboxylase family. In terms of assembly, homodimer.

The protein resides in the cytoplasm. The catalysed reaction is uroporphyrinogen III + 4 H(+) = coproporphyrinogen III + 4 CO2. Its pathway is porphyrin-containing compound metabolism; protoporphyrin-IX biosynthesis; coproporphyrinogen-III from 5-aminolevulinate: step 4/4. Catalyzes the decarboxylation of four acetate groups of uroporphyrinogen-III to yield coproporphyrinogen-III. The protein is Uroporphyrinogen decarboxylase of Jannaschia sp. (strain CCS1).